The chain runs to 1013 residues: Nucleotide-binding oligomerization domain-containing protein 2 (1013 aa).

CARD domains lie at 1–82 and 107–178; these read MCSQ…AVQE and LQSH…HVQK. The short motif at 36-50 is the ATG16L1-binding motif element; that stretch reads WEVLSWEDYEGLRLV. ADP contacts are provided by threonine 212, tyrosine 225, threonine 226, glycine 275, serine 276, glycine 277, lysine 278, serine 279, and threonine 280. Residues 214–247 are required for CARD9 binding; the sequence is DGAENLCLEDIYTENTLEVRTEVGMAGPLHKSPA. An NACHT domain is found at 266 to 402; that stretch reads DTVLVVGEAG…RKVLTSRPDA (137 aa). Residue 272–279 participates in ATP binding; that stretch reads GEAGSGKS. Cysteine 368 is lipidated: S-palmitoyl cysteine. Histidine 576 is an ADP binding site. 9 LRR repeats span residues 764–785, 789–812, 817–838, 845–857, 873–893, 901–922, 929–949, 957–978, and 985–1005; these read RPVALQLDHNSVGDIGVEQLLP, ACKALYLRDNNISDRGICKLIEHA, QLQKLALFNNKLTDGCAHSVAQ, NFLALRLGNNHIT, SLQFLGFWGNKVGDKGAQALA, SLKWLSLVGNNIGSVGAQALAS, ALEELCLEENHLQDAGVCSLA, SLKVLKLSNNCITFVGAEALLQ, and TILEVWLRGNPFSPEEMEALS.

Belongs to the NOD1-NOD2 family. In terms of assembly, homooligomer: homooligomerizes following muramyl dipeptide (MDP)-binding, promoting RIPK2 recruitment. Interacts (via CARD domain) with RIPK2 (via CARD domain). Following RIPK2 recruitment, RIPK2 homooligomerizes via its CARD domain and forms long filaments named RIPosomes. Interacts (via CARD domain) with ubiquitin; inhibiting interaction with RIPK2. Component of a signaling complex consisting of ARHGEF2, NOD2 and RIPK2. Interacts with ANKRD17 (via N-terminus). Interacts with HSPA1A; the interaction enhances NOD2 stability. Interacts (via both CARD domains) with HSP90; the interaction enhances NOD2 stability. Interacts (via CARD domain) with SOCS3; the interaction promotes NOD2 degradation. Interacts (via CARD domain) with ERBIN; the interaction inhibits activation of NOD2. Interacts with MAPKBP1; the interaction is enhanced in the presence of muramyl dipeptide (MDP) and inhibits NOD2 homooligomerization and activation. Interacts with INAVA; the interaction takes place upon Pattern recognition receptor (PRR) stimulation. Interacts (via NACHT domain) with CARD9. Interacts (via CARD domain) with CASP1; this interaction leads to IL1B processing. Also interacts with CASP4. Interacts with NLRP1; this interaction is enhanced in the presence of muramyl dipeptide (MDP) and leads to increased IL1B release. Interacts with NLRP12; this interaction promotes degradation of NOD2 through the ubiquitin-proteasome pathway. Interacts with ANKHD1, C10orf67, CHMP5, DOCK7, ENTR1, KRT15, LDOC1, PPP1R12C, PPP2R3B, TRIM41 and VIM. Interacts with MAVS; interaction takes place following single-stranded RNA (ssRNA)-binding. Interacts with ATG16L1. Interacts with IRGM; promoting IRGM 'Lys-63'-linked polyubiquitination, which is required for interactions with the core autophagy factors. Palmitoylated by ZDHHC5; palmitoylation is required for proper recruitment to the bacterial entry site and hence for proper signaling upon cognate peptidoglycan detection. Palmitoylation promotes localization to the cell membrane. Palmitoylation protects from SQSTM1/p62-dependent autophagic degradation. Post-translationally, polyubiquitinated by TRIM27, leading to proteasome-mediated degradation. Polyubiquitinated and degraded following muramyl dipeptide (MDP) stimulation, conferring MDP tolerance and preventing septic shock. In terms of processing, degraded via selective autophagy following interaction with IRGM. IRGM promotes NOD2-RIPK2 RIPosome recruitment to autophagosome membranes, promoting their SQSTM1/p62-dependent autophagic degradation. O-glycosylated by OGT, O-GlcNAcylation increases protein stability.

Its subcellular location is the cell membrane. It localises to the basolateral cell membrane. The protein resides in the cytoplasm. The protein localises to the mitochondrion. With respect to regulation, ADP-binding promotes an inactive closed conformation. Its function is as follows. Pattern recognition receptor (PRR) that detects bacterial peptidoglycan fragments and other danger signals and plays an important role in gastrointestinal immunity. Specifically activated by muramyl dipeptide (MDP), a fragment of bacterial peptidoglycan found in every bacterial peptidoglycan type. NOD2 specifically recognizes and binds 6-O-phospho-MDP, the phosphorylated form of MDP, which is generated by NAGK. 6-O-phospho-MDP-binding triggers oligomerization that facilitates the binding and subsequent activation of the proximal adapter receptor-interacting RIPK2. Following recruitment, RIPK2 undergoes 'Met-1'- (linear) and 'Lys-63'-linked polyubiquitination by E3 ubiquitin-protein ligases XIAP, BIRC2, BIRC3 and the LUBAC complex, becoming a scaffolding protein for downstream effectors, triggering activation of the NF-kappa-B and MAP kinases signaling. This in turn leads to the transcriptional activation of hundreds of genes involved in immune response. Its ability to detect bacterial MDP plays a central role in maintaining the equilibrium between intestinal microbiota and host immune responses to control inflammation. An imbalance in this relationship results in dysbiosis, whereby pathogenic bacteria prevail on commensals, causing damage in the intestinal epithelial barrier as well as allowing bacterial invasion and inflammation. Acts as a regulator of appetite by sensing MDP in a subset of brain neurons: microbiota-derived MDP reach the brain, where they bind and activate NOD2 in inhibitory hypothalamic neurons, decreasing neuronal activity, thereby regulating satiety and body temperature. NOD2-dependent MDP-sensing of bacterial cell walls in the intestinal epithelial compartment contributes to sustained postnatal growth upon undernutrition. Also plays a role in antiviral response by acting as a sensor of single-stranded RNA (ssRNA) from viruses: upon ssRNA-binding, interacts with MAVS, leading to activation of interferon regulatory factor-3/IRF3 and expression of type I interferon. Also acts as a regulator of autophagy in dendritic cells via its interaction with ATG16L1, possibly by recruiting ATG16L1 at the site of bacterial entry. NOD2 activation in the small intestine crypt also contributes to intestinal stem cells survival and function: acts by promoting mitophagy via its association with ATG16L1. In addition to its main role in innate immunity, also regulates the adaptive immune system by acting as regulator of helper T-cell and regulatory T-cells (Tregs). Besides recognizing pathogens, also involved in the endoplasmic reticulum stress response: acts by sensing and binding to the cytosolic metabolite sphingosine-1-phosphate generated in response to endoplasmic reticulum stress, initiating an inflammation process that leads to activation of the NF-kappa-B and MAP kinases signaling. May also be involved in NLRP1 activation following activation by MDP, leading to CASP1 activation and IL1B release in macrophages. This is Nucleotide-binding oligomerization domain-containing protein 2 from Oryctolagus cuniculus (Rabbit).